Consider the following 294-residue polypeptide: Mitochondrial glycine transporter (294 aa).

Solcar repeat units lie at residues 5–84, 102–186, and 208–292; these read RRAT…IRQA, LNMY…MKVL, and ASTL…IVKK. The next 6 membrane-spanning stretches (helical) occupy residues 11–36, 59–85, 108–133, 161–184, 212–238, and 267–285; these read LIGG…TRLQ, GALP…RQAI, MFSG…VRYE, GFGA…DRMK, INGS…KTRM, and GISL…AWGI.

The protein belongs to the mitochondrial carrier (TC 2.A.29) family. SLC25A38 subfamily.

It localises to the mitochondrion inner membrane. The enzyme catalyses glycine(in) = glycine(out). Its function is as follows. Mitochondrial glycine transporter that imports glycine into the mitochondrial matrix. Plays an important role in providing glycine for the first enzymatic step in heme biosynthesis, the condensation of glycine with succinyl-CoA to produce 5-aminolevulinate (ALA) in the mitochondrial matrix. The sequence is that of Mitochondrial glycine transporter from Kluyveromyces lactis (strain ATCC 8585 / CBS 2359 / DSM 70799 / NBRC 1267 / NRRL Y-1140 / WM37) (Yeast).